We begin with the raw amino-acid sequence, 472 residues long: Cysteine--tRNA ligase (472 aa).

Cysteine 28 serves as a coordination point for Zn(2+). The 'HIGH' region motif lies at 30-40 (PTVYDYTHIGH). Zn(2+) is bound by residues cysteine 207, histidine 232, and glutamate 236. The 'KMSKS' region motif lies at 264 to 268 (KMSKS). Lysine 267 serves as a coordination point for ATP.

It belongs to the class-I aminoacyl-tRNA synthetase family. The cofactor is Zn(2+).

It localises to the cytoplasm. The enzyme catalyses tRNA(Cys) + L-cysteine + ATP = L-cysteinyl-tRNA(Cys) + AMP + diphosphate. The polypeptide is Cysteine--tRNA ligase (cysS) (Aeropyrum pernix (strain ATCC 700893 / DSM 11879 / JCM 9820 / NBRC 100138 / K1)).